A 213-amino-acid polypeptide reads, in one-letter code: DELTA-actitoxin-Aas1a (213 aa).

Positions 1-19 (MSRLIIAFIVVTMVCSAIA) are cleaved as a signal peptide. The propeptide occupies 20–34 (LPKKKVEPLEKDEKR). The interval 37–46 (AVAGAVIEGG) is plays an important role in the hemolytic activity. The N-terminal region stretch occupies residues 45–64 (GGNLVMSVLDRILEAIGDVN). Positions 88, 121, 139, 141, 167, 171, and 172 each coordinate phosphocholine. The trp-rich region, which is important for the binding to lipid membrane stretch occupies residues 139-154 (SIPYDYNLYSNWWNVK). The Cell attachment site, crucial for protein stability signature appears at 178 to 180 (KGD).

This sequence belongs to the actinoporin family. Sea anemone subfamily. In terms of assembly, octamer or nonamer in membranes. Monomer in the soluble state.

It is found in the secreted. The protein resides in the nematocyst. Its subcellular location is the target cell membrane. Pore-forming protein that forms cation-selective hydrophilic pores of around 1 nm and causes cytolysis. Pore formation is a multi-step process that involves specific recognition of membrane sphingomyelin (but neither cholesterol nor phosphatidylcholine) using aromatic rich region and adjacent phosphocholine (POC) binding site, firm binding to the membrane (mainly driven by hydrophobic interactions) accompanied by the transfer of the N-terminal region to the lipid-water interface and finally pore formation after oligomerization of monomers. This protein shows potent hemolytic activity (EC(50)=8.8 ng/ml) that is specifically inhibited by sphingomyelin. Shows no phospholipase A2 activity, nor antimicrobial activity against the four bacteria tested. Is lethal to crayfish. The protein is DELTA-actitoxin-Aas1a of Anthopleura asiatica (Sea anemone).